The primary structure comprises 109 residues: Iron-sulfur cluster assembly protein CyaY (109 aa).

Belongs to the frataxin family.

In terms of biological role, involved in iron-sulfur (Fe-S) cluster assembly. May act as a regulator of Fe-S biogenesis. The polypeptide is Iron-sulfur cluster assembly protein CyaY (Acidovorax ebreus (strain TPSY) (Diaphorobacter sp. (strain TPSY))).